A 525-amino-acid polypeptide reads, in one-letter code: Protein disulfide-isomerase A2 (525 aa).

A signal peptide spans 1–21 (MSCQLLPVLLLLLLRASCPWG). The Thioredoxin 1 domain occupies 27–152 (RSPSEEPPEE…IAEWLRRRVG (126 aa)). Active-site nucleophile residues include Cys71 and Cys74. Cys71 and Cys74 are disulfide-bonded. N-linked (GlcNAc...) asparagine glycans are attached at residues Asn127 and Asn284. A Thioredoxin 2 domain is found at 367–496 (VLNGQVKPYL…FSKFLDNGGV (130 aa)). Active-site nucleophile residues include Cys418 and Cys421. A disulfide bond links Cys418 and Cys421. Residues 498–525 (PTEEPLEEPAAPFPEPPANSTMGSKEEL) are disordered. A glycan (N-linked (GlcNAc...) asparagine) is linked at Asn516. Polar residues predominate over residues 516 to 525 (NSTMGSKEEL). A Prevents secretion from ER motif is present at residues 522–525 (KEEL).

This sequence belongs to the protein disulfide isomerase family. In terms of assembly, monomer; predominantly as monomer under reducing conditions. Homodimer; disulfide-linked. Part of a large chaperone multiprotein complex comprising DNAJB11, HSP90B1, HSPA5, HYOU, PDIA2, PDIA4, PDIA6, PPIB, SDF2L1, UGGT1 and very small amounts of ERP29, but not, or at very low levels, CALR nor CANX. The disulfide-linked homodimer exhibits an enhanced chaperone activity. Post-translationally, glycosylated.

It localises to the endoplasmic reticulum lumen. The enzyme catalyses Catalyzes the rearrangement of -S-S- bonds in proteins.. In terms of biological role, acts as an intracellular estrogen-binding protein. May be involved in modulating cellular levels and biological functions of estrogens in the pancreas. May act as a chaperone that inhibits aggregation of misfolded proteins. The chain is Protein disulfide-isomerase A2 (PDIA2) from Pongo abelii (Sumatran orangutan).